Here is a 546-residue protein sequence, read N- to C-terminus: Mercuric reductase (546 aa).

The 65-residue stretch at 2-66 (NKFKVNISGM…AIDEANYQAG (65 aa)) folds into the HMA domain. Residues Cys-13 and Cys-16 each coordinate a metal cation. Positions 96, 116, and 121 each coordinate FAD. Cys-122 and Cys-127 are oxidised to a cystine. The FAD site is built by Lys-131 and Ala-195. NAD(+) is bound by residues 256–263 (GSGYIGME) and Gly-346. FAD-binding residues include Asp-387 and Val-395. The Hg(2+) site is built by Cys-543 and Cys-544.

Belongs to the class-I pyridine nucleotide-disulfide oxidoreductase family. As to quaternary structure, homodimer. It depends on FAD as a cofactor.

It catalyses the reaction Hg + NADP(+) + H(+) = Hg(2+) + NADPH. Uses NADPH as the preferred electron donor, but shows slight activity with NADH as well. Inhibited by Cu(2+), Cd(2+), Zn(2+) and Co(2+), with Cu(2+) showing the strongest inhibition. Enzyme activity is enhanced by b-mercaptoethanol and NaCl up to concentrations of 500 uM and 100 mM respectively, followed by inhibition at higher concentrations. In terms of biological role, resistance to Hg(2+) in bacteria appears to be governed by a specialized system which includes mercuric reductase. MerA protein is responsible for volatilizing mercury as Hg(0). Catalyzes reduction of Hg(2+) to elemental Hg, which is volatile and can diffuse out of cells passively. Plays a pivotal role in mercury resistance and cell protection. This is Mercuric reductase from Lysinibacillus sphaericus (Bacillus sphaericus).